The following is a 422-amino-acid chain: GPI mannosyltransferase 1 (422 aa).

The next 8 helical transmembrane spans lie at 10 to 30, 82 to 102, 162 to 182, 216 to 236, 282 to 302, 327 to 347, 352 to 372, and 385 to 405; these read TTPL…YGIY, FPAF…WLIL, IILG…PAIV, LKFG…MFAI, IESF…PLAL, SQYF…SSFL, LGIF…QQGY, and GLWL…GVII.

This sequence belongs to the PIGM family.

It is found in the endoplasmic reticulum membrane. Its pathway is glycolipid biosynthesis; glycosylphosphatidylinositol-anchor biosynthesis. Functionally, mannosyltransferase involved in glycosylphosphatidylinositol-anchor biosynthesis. Transfers the first alpha-1,4-mannose to GlcN-acyl-PI during GPI precursor assembly. Required for cell wall integrity. In Gibberella zeae (strain ATCC MYA-4620 / CBS 123657 / FGSC 9075 / NRRL 31084 / PH-1) (Wheat head blight fungus), this protein is GPI mannosyltransferase 1 (GPI14).